Here is a 357-residue protein sequence, read N- to C-terminus: uncharacterized protein (357 aa).

A signal peptide spans 1–19 (MKRILSFIFIILFFNSSYA).

This is an uncharacterized protein from Rickettsia prowazekii (strain Madrid E).